Here is a 670-residue protein sequence, read N- to C-terminus: DNA ligase (670 aa).

Residues Asp34–Asp38, Ser84–Leu85, Glu116–Val119, Arg139, Glu174, Tyr226, Lys291, and Lys315 contribute to the NAD(+) site. The active-site N6-AMP-lysine intermediate is Lys118. Zn(2+)-binding residues include Cys409, Cys412, Cys425, and Cys430. A BRCT domain is found at Glu586–Ala670.

This sequence belongs to the NAD-dependent DNA ligase family. LigA subfamily. It depends on Mg(2+) as a cofactor.

The catalysed reaction is NAD(+) + (deoxyribonucleotide)n-3'-hydroxyl + 5'-phospho-(deoxyribonucleotide)m = (deoxyribonucleotide)n+m + AMP + beta-nicotinamide D-nucleotide.. In terms of biological role, DNA ligase that catalyzes the formation of phosphodiester linkages between 5'-phosphoryl and 3'-hydroxyl groups in double-stranded DNA using NAD as a coenzyme and as the energy source for the reaction. It is essential for DNA replication and repair of damaged DNA. The chain is DNA ligase from Thermus filiformis.